The primary structure comprises 374 residues: Multicilin (374 aa).

Disordered regions lie at residues C18–A72 and C84–S105. A coiled-coil region spans residues E168–L216. Residues L284–G306 form a disordered region.

This sequence belongs to the geminin family. As to quaternary structure, heterodimer (via coiled-coil domain) with GMNN (via coiled-coil domain); targets GMNN to the nucleus. Can form homodimers (in vitro, via coiled-coil domain), but these are much less stable than the heterodimer formed with GMNN.

It localises to the nucleus. Its function is as follows. Transcription regulator specifically required for multiciliate cell differentiation. Acts in a multiprotein complex containing E2F4 and E2F5 that binds and activates genes required for centriole biogenesis. Required for the deuterosome-mediated acentriolar pathway. Plays a role in mitotic cell cycle progression by promoting cell cycle exit. Modulates GMNN activity by reducing its affinity for CDT1. The protein is Multicilin (MCIDAS) of Bos taurus (Bovine).